The following is a 603-amino-acid chain: Elongation factor 4 (603 aa).

In terms of domain architecture, tr-type G spans 5-187 (RHIRNFCIIA…AVVNFVPPPK (183 aa)). Residues 17-22 (DHGKST) and 134-137 (NKID) each bind GTP.

This sequence belongs to the TRAFAC class translation factor GTPase superfamily. Classic translation factor GTPase family. LepA subfamily.

It is found in the cell membrane. It carries out the reaction GTP + H2O = GDP + phosphate + H(+). Functionally, required for accurate and efficient protein synthesis under certain stress conditions. May act as a fidelity factor of the translation reaction, by catalyzing a one-codon backward translocation of tRNAs on improperly translocated ribosomes. Back-translocation proceeds from a post-translocation (POST) complex to a pre-translocation (PRE) complex, thus giving elongation factor G a second chance to translocate the tRNAs correctly. Binds to ribosomes in a GTP-dependent manner. This is Elongation factor 4 from Symbiobacterium thermophilum (strain DSM 24528 / JCM 14929 / IAM 14863 / T).